Consider the following 474-residue polypeptide: Cysteine--tRNA ligase (474 aa).

Residue Cys30 coordinates Zn(2+). The 'HIGH' region motif lies at 32 to 42; sequence PTVYNFAHIGN. Zn(2+) is bound by residues Cys212, His237, and Glu241. The short motif at 270–274 is the 'KMSKS' region element; that stretch reads KMSKS. Lys273 is an ATP binding site.

It belongs to the class-I aminoacyl-tRNA synthetase family. Monomer. It depends on Zn(2+) as a cofactor.

Its subcellular location is the cytoplasm. It catalyses the reaction tRNA(Cys) + L-cysteine + ATP = L-cysteinyl-tRNA(Cys) + AMP + diphosphate. The protein is Cysteine--tRNA ligase of Leptospira borgpetersenii serovar Hardjo-bovis (strain JB197).